The following is a 440-amino-acid chain: MAAGTLYTYPENWRAFKALIAAQYSGAQVRVLSAPPHFHFGQTNRTPEFLRKFPAGKVPAFEGDDGFCVFESNAIAYYVSNEELRGSTPEAAAQVVQWVSFADSDIVPPASTWVFPTLGIMHHNKQATENAKEEVRRILGLLDAHLKTRTFLVGERVTLADITVVCTLLWLYKQVLEPSFRQAFPNTNRWFLTCINQPQFRAVLGEVKLCEKMAQFDAKKFAESQPKKDTPRKEKGSREEKLKPQAERKEGKEEKKAAAPAPEEELDECEQALAAEPKAKDPFAHLPKSTFVLDEFKRKYSNEDTLSVALPYFWDHFDKDGWSLWYSEYRFPEELTQTFMSCNLITGMFQRLDKLRKNAFASVILFGTNNSSSISGVWDFRGQELAFPLSPDWQVDYESYTWRKLDPGSEETQTLVREYFCWEGAFQHVGKAFNQGKIFK.

An N-acetylalanine modification is found at alanine 2. The GST N-terminal domain occupies alanine 2–serine 87. Positions threonine 88–phenylalanine 216 constitute a GST C-terminal domain. An N6-acetyllysine mark is found at lysine 147 and lysine 212. The span at phenylalanine 221–alanine 257 shows a compositional bias: basic and acidic residues. The disordered stretch occupies residues phenylalanine 221–aspartate 267. Residue lysine 256 forms a Glycyl lysine isopeptide (Lys-Gly) (interchain with G-Cter in SUMO1) linkage. Residues alanine 279 to lysine 440 form the EF-1-gamma C-terminal domain. Lysine 288 participates in a covalent cross-link: Glycyl lysine isopeptide (Lys-Gly) (interchain with G-Cter in SUMO2). Lysine 404 carries the N6-acetyllysine modification. Lysine 437 carries the N6-acetyllysine; alternate modification. At lysine 437 the chain carries N6-malonyllysine; alternate.

EF-1 is composed of four subunits: alpha, beta, delta, and gamma.

Its function is as follows. Probably plays a role in anchoring the complex to other cellular components. This Bos taurus (Bovine) protein is Elongation factor 1-gamma (EEF1G).